Consider the following 310-residue polypeptide: Olfactory receptor 4C11 (310 aa).

Residues 1–23 (MQQNNSVPEFILLGLTQDPLRQK) are Extracellular-facing. N-linked (GlcNAc...) asparagine glycosylation occurs at asparagine 4. The helical transmembrane segment at 24–47 (IVFVIFLIFYMGTVVGNMLIIVTI) threads the bilayer. Over 48 to 55 (KSSRTLGS) the chain is Cytoplasmic. Residues 56–77 (PMYFFLFYLSFADSCFSTSTAP) traverse the membrane as a helical segment. Over 78–98 (RLIVDALSEKKIITYNECMTQ) the chain is Extracellular. An intrachain disulfide couples cysteine 95 to cysteine 187. A helical transmembrane segment spans residues 99–118 (VFALHLFGCMEIFVLILMAV). Over 119–137 (DRYVAICKPLRYPTIMSQQ) the chain is Cytoplasmic. A helical membrane pass occupies residues 138–156 (VCIILIVLAWIGSLIHSTA). Residues 157–193 (QIILALRLPFCGPYLIDHYCCDLQPLLKLACMDTYMI) are Extracellular-facing. Residues 194–217 (NLLLVSNSGAICSSSFMILIISYI) form a helical membrane-spanning segment. At 218–233 (VILHSLRNHSAKGKKK) the chain is on the cytoplasmic side. Residues 234–256 (ALSACTSHIIVVILFFGPCIFIY) form a helical membrane-spanning segment. The Extracellular portion of the chain corresponds to 257–267 (TRPPTTFPMDK). A helical membrane pass occupies residues 268-287 (MVAVFYTIGTPFLNPLIYTL). Residues 288–310 (RNAEVKNAMRKLWHGKIISENKG) lie on the Cytoplasmic side of the membrane.

The protein belongs to the G-protein coupled receptor 1 family.

The protein resides in the cell membrane. Functionally, odorant receptor. The polypeptide is Olfactory receptor 4C11 (OR4C11) (Homo sapiens (Human)).